Here is a 435-residue protein sequence, read N- to C-terminus: NADH-quinone oxidoreductase subunit D (435 aa).

This sequence belongs to the complex I 49 kDa subunit family. As to quaternary structure, NDH-1 is composed of 14 different subunits. Subunits NuoB, C, D, E, F, and G constitute the peripheral sector of the complex.

The protein resides in the cell membrane. The enzyme catalyses a quinone + NADH + 5 H(+)(in) = a quinol + NAD(+) + 4 H(+)(out). Functionally, NDH-1 shuttles electrons from NADH, via FMN and iron-sulfur (Fe-S) centers, to quinones in the respiratory chain. The immediate electron acceptor for the enzyme in this species is believed to be ubiquinone. Couples the redox reaction to proton translocation (for every two electrons transferred, four hydrogen ions are translocated across the cytoplasmic membrane), and thus conserves the redox energy in a proton gradient. The sequence is that of NADH-quinone oxidoreductase subunit D from Stenotrophomonas maltophilia (strain K279a).